Here is a 153-residue protein sequence, read N- to C-terminus: Pheromone-binding protein Gp-9 (153 aa).

Positions 1 to 19 (MKTFVLHIFIFALVAFASA) are cleaved as a signal peptide. Intrachain disulfides connect Cys-37/Cys-77, Cys-73/Cys-129, and Cys-118/Cys-138.

It belongs to the PBP/GOBP family. In terms of assembly, homodimer.

The protein resides in the secreted. Its function is as follows. Colony queen number, a major feature of social organization, is associated with worker genotype for Gp-9. Colonies are headed by either a single reproductive queen (monogyne form) or multiple queens (polygyne form). Differences in worker Gp-9 genotypes between social forms may cause differences in workers' abilities to recognize queens and regulate their numbers. This Solenopsis electra (Fire ant) protein is Pheromone-binding protein Gp-9.